We begin with the raw amino-acid sequence, 343 residues long: Proto-oncogene serine/threonine-protein kinase mos (343 aa).

A Protein kinase domain is found at 63–339; sequence VCLMHRLGSG…LLQRDLKAFR (277 aa). ATP-binding positions include 69 to 77 and Lys90; that span reads LGSGGFGSV. Asp198 acts as the Proton acceptor in catalysis.

Belongs to the protein kinase superfamily. Ser/Thr protein kinase family. In terms of assembly, interacts with MAP2K1/MEK1.

It is found in the cytoplasm. It catalyses the reaction L-seryl-[protein] + ATP = O-phospho-L-seryl-[protein] + ADP + H(+). It carries out the reaction L-threonyl-[protein] + ATP = O-phospho-L-threonyl-[protein] + ADP + H(+). Functionally, serine/threonine kinase involved in the regulation of MAPK signaling. Is an activator of the ERK1/2 signaling cascade playing an essential role in the stimulation of oocyte maturation. The polypeptide is Proto-oncogene serine/threonine-protein kinase mos (Mus musculus (Mouse)).